We begin with the raw amino-acid sequence, 867 residues long: Bifunctional diterpene synthase, chloroplastic (867 aa).

Residues 1-55 (MAKVLFSSFQQTGISGSLKSGQLSGVFINGTNLKSNAHAKRFRKNSTSSITIRCC) constitute a chloroplast transit peptide. Lysine 255 is a binding site for substrate. Mg(2+) is bound by residues aspartate 389 and aspartate 391. A DXDD motif motif is present at residues 389–392 (DIDD). Lysine 474 provides a ligand contact to substrate. Residues aspartate 611, aspartate 615, asparagine 758, threonine 762, and glutamate 766 each contribute to the Mg(2+) site. The DDXXD motif motif lies at 611–615 (DDLMD).

The protein belongs to the terpene synthase family. It depends on Mg(2+) as a cofactor.

It is found in the plastid. It localises to the chloroplast. It catalyses the reaction (+)-copalyl diphosphate = miltiradiene + diphosphate. The catalysed reaction is (2E,6E,10E)-geranylgeranyl diphosphate = (+)-copalyl diphosphate. Its pathway is secondary metabolite biosynthesis; terpenoid biosynthesis. Functionally, bifunctional diterpene cyclase that catalyzes the successive two-step type-B (protonation-initiated cyclization) and type-A (ionization-initiated cyclization) reactions of geranylgeranyl diphosphate (GGDP) producing successively (+)-copalyl diphosphate and miltiradiene. This is Bifunctional diterpene synthase, chloroplastic (MDS) from Selaginella moellendorffii (Spikemoss).